Here is a 97-residue protein sequence, read N- to C-terminus: Small ribosomal subunit protein bS6 (97 aa).

The protein belongs to the bacterial ribosomal protein bS6 family.

Binds together with bS18 to 16S ribosomal RNA. The chain is Small ribosomal subunit protein bS6 from Syntrophomonas wolfei subsp. wolfei (strain DSM 2245B / Goettingen).